Here is a 384-residue protein sequence, read N- to C-terminus: Autophagy-related protein 30 (384 aa).

A disordered region spans residues 1–63 (MFSRKQVQKR…ASPGQLRPRT (63 aa)). The span at 13-27 (ELSSLHCSNSSNSLN) shows a compositional bias: low complexity. Over residues 45–63 (RGNNRSDNVASPGQLRPRT) the composition is skewed to polar residues. Serine 112 is modified (phosphoserine). The segment at 266–291 (VKHDKPSSPLPNYHNTLKQAPSSNSQ) is disordered. Positions 278–291 (YHNTLKQAPSSNSQ) are enriched in polar residues.

Interacts with ATG11, ATG17, ATG37, PEX3 and PEX14. In terms of processing, phosphorylation at Ser-112 is required for micro- and macropexophagy.

The protein resides in the vacuole lumen. It is found in the preautophagosomal structure. The protein localises to the peroxisome membrane. Acts as the peroxisome receptor for pexophagy. Required for both micropexophagy and macropexophagy, but not for the cytoplasm to vacuole transport (Cvt) or autophagy pathways. Required for functional micropexophagic apparatus (MIPA) and relocation of ATG11 to the peroxisome-sequestering arms of the vacuole. This is Autophagy-related protein 30 (ATG30) from Komagataella phaffii (strain GS115 / ATCC 20864) (Yeast).